Reading from the N-terminus, the 517-residue chain is Carotenoid phi-ring synthase (517 aa).

The interval 1 to 24 is disordered; it reads MFARDSGRGHRHGRDRQAAVVPAP. FAD is bound by residues Ala45, 64-65, Arg72, Tyr99, Asp461, and Met472; that span reads ER.

The protein belongs to the carotenoid/retinoid oxidoreductase family. Requires FAD as cofactor.

The catalysed reaction is a carotenoid beta-end derivative + 2 A = a carotenoid phi-end derivative + 2 AH2. The protein operates within carotenoid biosynthesis. In terms of biological role, involved in the biosynthesis of isorenieratene, a carotenoid with aromatic end groups. Catalyzes the introduction of two additional double bonds into each ionone ring of beta-carotene to produce isorenieratene. The reaction includes an intramolecular methyl transfer from position C1 to position C2 of the ring. The chain is Carotenoid phi-ring synthase from Streptomyces griseus.